The chain runs to 497 residues: Keratin, type II cytoskeletal 8 (497 aa).

The segment at 2-108 (TSYQRTVTVR…DPRIGQVRLE (107 aa)) is head. The segment at 109 to 149 (EKEQIKTLNNQFAGFIDKVRYLEQQNKLLETKWQLLQNQTT) is coil 1A. Residues 109-421 (EKEQIKTLNN…KLLEGEESRL (313 aa)) form the IF rod domain. Positions 145-162 (QNQTTPSRSNLDSMFEAY) are linker 1. Positions 163 to 254 (ISNLRRQLDT…QIYDEEIREL (92 aa)) are coil 1B. Residues 255-278 (QTQIQDTSVIVQMDNNRQLDLDNI) are linker 12. The segment at 279 to 417 (IAEVRAQYED…ATYRKLLEGE (139 aa)) is coil 2. The tract at residues 418-497 (ESRLASGIQA…VSERSNIVKE (80 aa)) is tail.

This sequence belongs to the intermediate filament family. Heterotetramer of two type I and two type II keratins. Keratin-8 associates with keratin-18. Expressed in skin.

Its subcellular location is the cytoplasm. The protein resides in the nucleus. It is found in the nucleoplasm. It localises to the nucleus matrix. Its function is as follows. Together with KRT19, helps to link the contractile apparatus to dystrophin at the costameres of striated muscle. The protein is Keratin, type II cytoskeletal 8 of Protopterus aethiopicus (Marbled lungfish).